The primary structure comprises 314 residues: Oxidoreductase poxI (314 aa).

This sequence belongs to the NmrA-type oxidoreductase family. Isoflavone reductase subfamily.

The protein operates within secondary metabolite biosynthesis. Its function is as follows. Oxidoreductase; part of the gene cluster that mediates the biosynthesis of oxaleimides, cytotoxic compounds containing an unusual disubstituted succinimide moiety. The first step of the pathway is provided by the HR-PKS poxF that serves in a new mode of collaborative biosynthesis with the PKS-NRPS poxE, by providing the olefin containing amino acid substrate via the synthesis of an ACP-bound dec-4-enoate. The cytochrome P450 monooxygenase poxM-catalyzed oxidation at the alpha-position creates the enzyme-bound 2-hydroxydec-4-enoyl-ACP thioester, which may be prone to spontaneous hydrolysis to yield 2-hydroxydec-4-enoic acid due to increased electrophilicity of the carbonyl. 2-hydroxydec-4-enoic acid can then be further oxidized by poxM to yield the alpha-ketoacid 2-oxodec-4-enoicacid, which is reductively aminated by the aminotransferase poxL to yield (S,E)-2-aminodec-4-enoic acid. The Hybrid PKS-NRPS synthetase poxE then performs condensation between the octaketide product of its PKS modules and the amino group of (S,E)-2-aminodec-4-enoic acid which is activated and incorporated by the adenylation domain. The resulting aminoacyl product can be cyclized by the Diels-Alderase PoxQ and reductively released by the reductive (R) domain of poxE to yield an aldehyde intermediate. The released aldehyde is then substrate for a Knoevenagel condensation by the hydrolyase poxO followed by an oxidation at the 5-position of the pyrrolidone ring. The presence of the olefin from the amino acid building block allows for migration of the substituted allyl group to occur. This allylic transposition reaction takes place in a conjugate addition, semipinacol-like fashion to yield a succinimide intermediate. Iterative two-electron oxidations of the C7 methyl of the succinimide intermediate to the carboxylic acid can be catalyzed by one of two remaining cytochrome P450 monooxygenasess poxC or poxD to yield oxaleimide A. Subsequent oxidation yields the maleimide scaffold oxaleimide I. Both oxaleimide A and oxaleimide I can undergo oxidative modifications in the decalin ring to yield the series of products oxaleimides B to H. This is Oxidoreductase poxI from Penicillium oxalicum (strain 114-2 / CGMCC 5302) (Penicillium decumbens).